Here is a 196-residue protein sequence, read N- to C-terminus: Imidazole glycerol phosphate synthase subunit HisH (196 aa).

One can recognise a Glutamine amidotransferase type-1 domain in the interval 2-196 (NVVILDTGCA…AKLLKNFLEM (195 aa)). Cys77 functions as the Nucleophile in the catalytic mechanism. Catalysis depends on residues His178 and Glu180.

Heterodimer of HisH and HisF.

The protein resides in the cytoplasm. The catalysed reaction is 5-[(5-phospho-1-deoxy-D-ribulos-1-ylimino)methylamino]-1-(5-phospho-beta-D-ribosyl)imidazole-4-carboxamide + L-glutamine = D-erythro-1-(imidazol-4-yl)glycerol 3-phosphate + 5-amino-1-(5-phospho-beta-D-ribosyl)imidazole-4-carboxamide + L-glutamate + H(+). The enzyme catalyses L-glutamine + H2O = L-glutamate + NH4(+). Its pathway is amino-acid biosynthesis; L-histidine biosynthesis; L-histidine from 5-phospho-alpha-D-ribose 1-diphosphate: step 5/9. Functionally, IGPS catalyzes the conversion of PRFAR and glutamine to IGP, AICAR and glutamate. The HisH subunit catalyzes the hydrolysis of glutamine to glutamate and ammonia as part of the synthesis of IGP and AICAR. The resulting ammonia molecule is channeled to the active site of HisF. In Shigella dysenteriae serotype 1 (strain Sd197), this protein is Imidazole glycerol phosphate synthase subunit HisH.